The primary structure comprises 264 residues: Small ribosomal subunit protein eS1 (264 aa).

At Lys-34 the chain carries N6-acetyllysine; alternate. Lys-34 is covalently cross-linked (Glycyl lysine isopeptide (Lys-Gly) (interchain with G-Cter in SUMO2); alternate). Lys-56 carries the N6-acetyllysine modification. Tyr-155 is subject to ADP-ribosyltyrosine. The interval 232 to 264 (HGEGSSSGKATGDETGAKVERADGYEPPVQESV) is disordered. Ser-236 and Ser-237 each carry phosphoserine. Residues 242–255 (TGDETGAKVERADG) show a composition bias toward basic and acidic residues. Lys-249 carries the N6-acetyllysine; alternate modification. A Glycyl lysine isopeptide (Lys-Gly) (interchain with G-Cter in SUMO2); alternate cross-link involves residue Lys-249. Position 256 is a phosphotyrosine (Tyr-256). Ser-263 bears the Phosphoserine mark.

This sequence belongs to the eukaryotic ribosomal protein eS1 family. Component of the small ribosomal subunit. Mature ribosomes consist of a small (40S) and a large (60S) subunit. The 40S subunit contains about 33 different proteins and 1 molecule of RNA (18S). The 60S subunit contains about 49 different proteins and 3 molecules of RNA (28S, 5.8S and 5S). Identified in a IGF2BP1-dependent mRNP granule complex containing untranslated mRNAs. Binds with high affinity to IPO4. Interacts with DDIT3. Part of the small subunit (SSU) processome, composed of more than 70 proteins and the RNA chaperone small nucleolar RNA (snoRNA) U3. ADP-ribosylated at Tyr-155 by PARP1 in presence of HPF1.

The protein resides in the cytoplasm. It localises to the nucleus. The protein localises to the nucleolus. Its function is as follows. Component of the small ribosomal subunit. The ribosome is a large ribonucleoprotein complex responsible for the synthesis of proteins in the cell. Part of the small subunit (SSU) processome, first precursor of the small eukaryotic ribosomal subunit. During the assembly of the SSU processome in the nucleolus, many ribosome biogenesis factors, an RNA chaperone and ribosomal proteins associate with the nascent pre-rRNA and work in concert to generate RNA folding, modifications, rearrangements and cleavage as well as targeted degradation of pre-ribosomal RNA by the RNA exosome. May play a role during erythropoiesis through regulation of transcription factor DDIT3. The chain is Small ribosomal subunit protein eS1 from Bos taurus (Bovine).